The primary structure comprises 349 residues: Protein DMR6-LIKE OXYGENASE 1 (349 aa).

The Fe2OG dioxygenase domain maps to 197 to 296; sequence HAQHMAFNYY…RLSIPTFYFP (100 aa). Tyr206 contributes to the 2-oxoglutarate binding site. Fe cation is bound by residues His221, Asp223, and His277. Arg287 and Ser289 together coordinate 2-oxoglutarate.

This sequence belongs to the iron/ascorbate-dependent oxidoreductase family. Requires L-ascorbate as cofactor. Fe(2+) is required as a cofactor.

The catalysed reaction is salicylate + NADH + O2 + H(+) = 2,3-dihydroxybenzoate + NAD(+) + H2O. Functionally, converts salicylic acid (SA) to both 2,3-dihydroxybenzoic acid (2,3-DHBA) and 2,5-DHBA in vitro but only 2,3-DHBA in vivo. Component of a negative feedback regulation system of SA levels during senescence. Regulates both onset and progression of leaf senescence. Negative regulator of defense against Hyaloperonospora arabidopsidis. (Microbial infection) Confers susceptibility to the downy mildew pathogen Hyaloperonospora arabidopsidis. The polypeptide is Protein DMR6-LIKE OXYGENASE 1 (Arabidopsis thaliana (Mouse-ear cress)).